Here is a 277-residue protein sequence, read N- to C-terminus: Phycobilisome rod-core linker polypeptide CpcG1 (277 aa).

One can recognise a PBS-linker domain in the interval 11–189; it reads RTLDQRVVSY…YWRNKEISLS (179 aa).

This sequence belongs to the phycobilisome linker protein family. As to quaternary structure, the phycobilisome is a hemidiscoidal structure that is composed of two distinct substructures: a core complex and a number of rods radiating from the core.

The protein resides in the cellular thylakoid membrane. In terms of biological role, rod-core linker protein required for attachment of phycocyanin to allophycocyanin in cores of phycobilisomes. Linker polypeptides determine the state of aggregation and the location of the disk-shaped phycobiliprotein units within the phycobilisome and modulate their spectroscopic properties in order to mediate a directed and optimal energy transfer. The polypeptide is Phycobilisome rod-core linker polypeptide CpcG1 (cpcG1) (Thermosynechococcus vestitus (strain NIES-2133 / IAM M-273 / BP-1)).